The sequence spans 899 residues: MTTDIVTSRINFYPYTVLPSAKPVYQYDLSIQVSTQGYNLDNADSYRALEKFCEQQDTALGNDPARSLFYSLIVDFPSSDSRPISSFYSQTDLGSRPVTHTVEFLSTQKPKRRGGRAGGMRGNRGGPSTTSVQALVKVTRVRQMDPLDLMSMKTLLNILLRRTFESSLGMLNIRSGFYDLNRTSTHNIQVDGRGFDICWIPGFRLTTATLYGKLGLQVLPETTKVRSKSMCELLNENRGSLHPNALAAITVMAMHNGRVFRIHSIVRGQSVVSPLAEGSDTDYFTYYSAKYKDKIDSAALSLLKQDDYCNSVLQRDKFILKLTPLKKTHNGKVVRSCNVPSSLCIIISDNEIAPYGVSKLSTNKTAVALSTMSPDALLEKATEFANQLIDNAELQSVLGDYGFRFTSQPLELDTFVCKPPKLMMDTLSRELTVEDDSGGVFRSLIQSPGVSSIYYANNGQPAVGMPHWALMVPRYLKNDYARRLKQELTQRIRSLAGATASTVEEPLLIAVDVNEQRRDMYRIEPYKDAFESLLVKLNTQYPDTKNSELISRIQLVVVVIPGPKQYSGGLYKEVKRFYTDKGIVTQCLLTPRLSRDGPEWYDQAILNGLCQQIYAKAGGAVWAPALPKDNAYSTSTMLCALDVSRPKKTVGRPTEVPASTAGFISTYEGSFEYIYSQKKNLMPNRLNQGGEVQQQTLMKTFIKNSCEVYSAFNSSLPDRIVIFRDGVSDGQISTVLETEINSLYEYLCQRYREANRPMCDLKVIVAQKTCAMRLAAVSNTDLRPGFYILNHSPDNKQKGSEFIMASQAIVHGTTPKPIRYKLIFDSTEASMDNSSFKQLIELTNTMAYGYVNWPQAISLPHILHMAHLLSKFCGEILGNGRDLLESQAIFGLQYRPFFI.

A disordered region spans residues 107–129; it reads TQKPKRRGGRAGGMRGNRGGPST. Over residues 116–125 the composition is skewed to gly residues; the sequence is RAGGMRGNRG. Residues 229-313 form the PAZ domain; it reads SMCELLNENR…KQDDYCNSVL (85 aa). The Piwi domain occupies 555–878; that stretch reads LVVVVIPGPK…LSKFCGEILG (324 aa).

The protein belongs to the argonaute family. Ago subfamily. Interacts with miR2. Highly specific binding to the mRNA m7G-cap. May be a component of the RNA-induced silencing complex (RISC), a sequence-specific, multicomponent nuclease that destroys or silences messenger RNAs homologous to the silencing trigger.

Its subcellular location is the cytoplasm. Functionally, plays an essential role in growth and, with Dicer, also involved in microRNA (miRNA)-mediated translational repression. The RNA interference pathway is implicated in antigenic variation having a role in regulation of variant-specific surface protein (VSP)-coding gene expression. Several VSP genes are transcribed but only transcripts encoding the VSP to be expressed accumulate. Antisense RNAs corresponding to the silenced VSP genes are detected. The sequence is that of Protein argonaute from Giardia intestinalis (strain ATCC 50581 / GS clone H7) (Giardia lamblia).